An 81-amino-acid chain; its full sequence is Large ribosomal subunit protein bL31B (81 aa).

It belongs to the bacterial ribosomal protein bL31 family. Type B subfamily. As to quaternary structure, part of the 50S ribosomal subunit.

The chain is Large ribosomal subunit protein bL31B from Limosilactobacillus reuteri (strain DSM 20016) (Lactobacillus reuteri).